The following is a 265-amino-acid chain: Cell division protein DivIB (265 aa).

At 1–33 the chain is on the cytoplasmic side; sequence MRMELKMMGNVNKSNKTNEYILRRHKKKRKKKL. The helical transmembrane segment at 34–54 threads the bilayer; that stretch reads IIFSILLISILVTLCFKHPFF. The POTRA domain maps to 54 to 122; it reads FNVKIVEVKD…NKIVIHIKER (69 aa). Topologically, residues 55–265 are extracellular; it reads NVKIVEVKDN…FKGNPVVFIK (211 aa).

The protein belongs to the FtsQ/DivIB family. DivIB subfamily.

It localises to the cell membrane. Functionally, cell division protein that may be involved in stabilizing or promoting the assembly of the division complex. The chain is Cell division protein DivIB from Clostridium tetani (strain Massachusetts / E88).